The primary structure comprises 121 residues: Small ribosomal subunit protein bS6 (121 aa).

The disordered stretch occupies residues 94–121 (KAETGPSAVMKRVEKEEARKSSQQETAA). A compositionally biased stretch (basic and acidic residues) spans 104-115 (KRVEKEEARKSS).

Belongs to the bacterial ribosomal protein bS6 family.

Binds together with bS18 to 16S ribosomal RNA. The chain is Small ribosomal subunit protein bS6 from Leptothrix cholodnii (strain ATCC 51168 / LMG 8142 / SP-6) (Leptothrix discophora (strain SP-6)).